The primary structure comprises 227 residues: Large ribosomal subunit protein uL1 (227 aa).

This sequence belongs to the universal ribosomal protein uL1 family. Part of the 50S ribosomal subunit.

Binds directly to 23S rRNA. The L1 stalk is quite mobile in the ribosome, and is involved in E site tRNA release. Its function is as follows. Protein L1 is also a translational repressor protein, it controls the translation of the L11 operon by binding to its mRNA. The protein is Large ribosomal subunit protein uL1 of Mesoplasma florum (strain ATCC 33453 / NBRC 100688 / NCTC 11704 / L1) (Acholeplasma florum).